The sequence spans 194 residues: Gonadal protein gdl (194 aa).

The protein belongs to the gonadal family. As to expression, in stage 6-14 egg chamber nurse cells and oocytes of adult females and spermatocyte cysts and bundles of maturing sperm of larval, pupal and adult males.

The sequence is that of Gonadal protein gdl (gdl) from Drosophila melanogaster (Fruit fly).